The following is a 424-amino-acid chain: UPF0229 protein PC1_1960 (424 aa).

Residues 46-109 (IESGESVSIP…GQGDASKDGE (64 aa)) are disordered. Basic and acidic residues predominate over residues 77-90 (PGNDHFVQNDKIER). A compositionally biased stretch (gly residues) spans 92–101 (QGGGGGGSGQ).

Belongs to the UPF0229 family.

The protein is UPF0229 protein PC1_1960 of Pectobacterium carotovorum subsp. carotovorum (strain PC1).